A 420-amino-acid chain; its full sequence is Serine/threonine-protein kinase PCRK2 (420 aa).

A disordered region spans residues 1-64 (MKCFLFPLGD…SNTSMSAREN (64 aa)). Positions 22-36 (SPTSNFSDVNKSGSD) are enriched in polar residues. A compositionally biased stretch (low complexity) spans 42 to 58 (VSGTSTVSSTGRNSNTS). Thr70 is modified (phosphothreonine). Residues 81-366 (FSRSGMIGEG…EVLEMVTKIV (286 aa)) form the Protein kinase domain. ATP is bound by residues 87-95 (IGEGGFGCV) and Lys115. Tyr164 carries the post-translational modification Phosphotyrosine. Asp215 (proton acceptor) is an active-site residue. Ser219 and Ser249 each carry phosphoserine. A phosphothreonine mark is found at Thr250 and Thr255. Tyr263 carries the phosphotyrosine modification. Positions 369–396 (SSPGNGGKKPQLVPLKSQETSRVEEGKN) are disordered. Positions 387 to 396 (ETSRVEEGKN) are enriched in basic and acidic residues.

This sequence belongs to the protein kinase superfamily. Ser/Thr protein kinase family. As to quaternary structure, interacts with FLS2.

The protein resides in the cell membrane. The catalysed reaction is L-seryl-[protein] + ATP = O-phospho-L-seryl-[protein] + ADP + H(+). The enzyme catalyses L-threonyl-[protein] + ATP = O-phospho-L-threonyl-[protein] + ADP + H(+). Functions redundantly with PCRK1 in basal resistance against bacterial pathogens and in regulation of plant immunity. Functions together with PCRK1 downstream of the pathogen-associated molecular pattern (PAMP) receptor FLS2. Contributes to the induction of SARD1 and CBP60G, which are transcriptional activator of ICS1, an enzyme involved in salicylate (SA) biosynthesis upon pathogen attack. The sequence is that of Serine/threonine-protein kinase PCRK2 from Arabidopsis thaliana (Mouse-ear cress).